A 1083-amino-acid polypeptide reads, in one-letter code: Solute carrier family 12 member 7 (1083 aa).

The disordered stretch occupies residues 1–51 (MPTNFTVVPVEARADGAGDEAAERTEEPGSPESADPACPTPGDGNPRENSP). Residues 1-119 (MPTNFTVVPV…RREIKAPRMG (119 aa)) lie on the Cytoplasmic side of the membrane. The span at 12-27 (ARADGAGDEAAERTEE) shows a compositional bias: basic and acidic residues. A phosphoserine mark is found at Ser30, Ser33, Ser50, and Ser62. Residues 120-142 (TFIGVYLPCLQNILGVILFLRLT) form a discontinuously helical membrane-spanning segment. The K(+) site is built by Asn131 and Ile132. Position 135 (Val135) interacts with chloride. Over 143–149 (WIVGAAG) the chain is Extracellular. A helical membrane pass occupies residues 150 to 172 (VLESFLIVAMCCTCTMLTAISMS). At 173-196 (AIATNGVVPAGGSYYMISRSLGPE) the chain is on the cytoplasmic side. Residues 197 to 225 (FGGAVGLCFYLGTTFAGAMYILGTIEIFL) form a helical membrane-spanning segment. Residues 226-249 (TYISPSAAIFQAETADGEAAALLN) lie on the Extracellular side of the membrane. 2 helical membrane passes run 250 to 271 (NMRV…VGVK) and 272 to 300 (YVNK…KTAF). The Extracellular portion of the chain corresponds to 301–419 (APPDIPVCLL…PYVLTDIMTY (119 aa)). 3 N-linked (GlcNAc...) asparagine glycosylation sites follow: Asn312, Asn331, and Asn360. The helical transmembrane segment at 420-440 (FTMLVGIYFPSVTGIMAGSNR) threads the bilayer. K(+) contacts are provided by Pro429 and Thr432. Pro429 is a binding site for chloride. Positions 433 and 434 each coordinate chloride. Residues 441–450 (SGDLKDAQKS) are Cytoplasmic-facing. The helical transmembrane segment at 451 to 473 (IPTGTILAIVTTSFIYLSCIVLF) threads the bilayer. At 474 to 504 (GACIEGVVLRDKFGEALQGNLVIGMLAWPSP) the chain is on the extracellular side. Residues 505-531 (WVIVIGSFFSTCGAGLQSLTGAPRLLQ) form a helical membrane-spanning segment. The Cytoplasmic portion of the chain corresponds to 532–554 (AIARDGIIPFLQVFGHGKANGEP). Transmembrane regions (helical) follow at residues 555–573 (TWAL…LIAS) and 574–598 (LDSV…ACAV). Tyr589 is a chloride binding site. The Cytoplasmic portion of the chain corresponds to 599-612 (QTLLRTPNWRPRFK). Helical transmembrane passes span 613-635 (FYHW…ICSW) and 636-651 (YYAL…IYKY). The Cytoplasmic portion of the chain corresponds to 652 to 1083 (IEYRGAEKEW…GGREVITIYS (432 aa)). Positions 664 to 680 (GIRGLSLNAARYALLRV) are scissor helix. A phosphothreonine mark is found at Thr973 and Thr980.

It belongs to the SLC12A transporter family. K/Cl co-transporter subfamily. Homodimer; adopts a domain-swap conformation at the scissor helices connecting the transmembrane domain and C-terminal domain. Heterodimer with K-Cl cotransporter SLC12A5. Widely expressed with highest levels in kidney, liver and pancreas. Expressed in choroid plexus and suprachiasmatic nucleus.

It localises to the cell membrane. It catalyses the reaction K(+)(in) + chloride(in) = K(+)(out) + chloride(out). With respect to regulation, activated by N-ethylmaleimide (NEM). Inhibited by furosemide, DIDS and bumetanide. The inhibition is much stronger in the presence of 50 mM K(+) in the uptake medium. Inhibited by DIOA. Inhibited by WNK3. In terms of biological role, mediates electroneutral potassium-chloride cotransport when activated by cell swelling. May mediate K(+) uptake into Deiters' cells in the cochlea and contribute to K(+) recycling in the inner ear. Important for the survival of cochlear outer and inner hair cells and the maintenance of the organ of Corti. May be required for basolateral Cl(-) extrusion in the kidney and contribute to renal acidification. This is Solute carrier family 12 member 7 from Rattus norvegicus (Rat).